The sequence spans 844 residues: Serrate RNA effector molecule homolog B (844 aa).

Disordered stretches follow at residues 1-90 (MADS…HGSD), 277-401 (EAAK…PRPL), 555-575 (ELLS…GNPT), and 794-825 (PNPY…MRGD). 2 stretches are compositionally biased toward basic and acidic residues: residues 16-73 (FRRE…RHDI) and 277-337 (EAAK…ETRK). Over residues 349-359 (SDDGSDSESDT) the composition is skewed to acidic residues. Residues 376 to 397 (DTPKKEEETEKPKEKPKEDTVK) are compositionally biased toward basic and acidic residues.

It belongs to the ARS2 family. Interacts ncbp1/cbp80.

The protein resides in the nucleus. Its subcellular location is the nucleoplasm. It localises to the cytoplasm. Acts as a mediator between the cap-binding complex (CBC) and the primary microRNAs (miRNAs) processing machinery during cell proliferation. Contributes to the stability and delivery of capped primary miRNA transcripts to the primary miRNA processing complex, thereby playing a role in RNA-mediated gene silencing (RNAi) by miRNAs. This chain is Serrate RNA effector molecule homolog B (srrt-b), found in Xenopus laevis (African clawed frog).